A 298-amino-acid polypeptide reads, in one-letter code: DNA repair protein RecO (298 aa).

The protein belongs to the RecO family.

Functionally, involved in DNA repair and RecF pathway recombination. This chain is DNA repair protein RecO, found in Cupriavidus metallidurans (strain ATCC 43123 / DSM 2839 / NBRC 102507 / CH34) (Ralstonia metallidurans).